The primary structure comprises 446 residues: Exodeoxyribonuclease 7 large subunit (446 aa).

This sequence belongs to the XseA family. As to quaternary structure, heterooligomer composed of large and small subunits.

Its subcellular location is the cytoplasm. It catalyses the reaction Exonucleolytic cleavage in either 5'- to 3'- or 3'- to 5'-direction to yield nucleoside 5'-phosphates.. Its function is as follows. Bidirectionally degrades single-stranded DNA into large acid-insoluble oligonucleotides, which are then degraded further into small acid-soluble oligonucleotides. In Streptococcus pneumoniae (strain ATCC BAA-255 / R6), this protein is Exodeoxyribonuclease 7 large subunit.